Here is a 92-residue protein sequence, read N- to C-terminus: Bombyxin A-3 (92 aa).

Positions 1–19 are cleaved as a signal peptide; sequence MKILLAIALMLSTVMWVST. Residue Gln20 is modified to Pyrrolidone carboxylic acid. 3 disulfide bridges follow: Cys29-Cys79, Cys41-Cys92, and Cys78-Cys83. Positions 50 to 70 are cleaved as a propeptide — c peptide like; sequence SDAQYVSYGSAWLMPYSEGRG.

The protein belongs to the insulin family. Heterodimer of a B chain and an A chain linked by two disulfide bonds.

It localises to the secreted. Brain peptide responsible for activation of prothoracic glands to produce ecdysone in insects. In Bombyx mori (Silk moth), this protein is Bombyxin A-3 (BBXA3).